The chain runs to 189 residues: Putative manganese efflux pump MntP (189 aa).

Transmembrane regions (helical) follow at residues 3–23 (PVAT…AAIG), 41–61 (LIFG…GKAA), 62–82 (AQYV…VLGA), 104–124 (FWLL…VGAG), 132–152 (IYST…IGVM), and 168–188 (AGGI…LNIF).

The protein belongs to the MntP (TC 9.B.29) family.

The protein localises to the cell inner membrane. Functionally, probably functions as a manganese efflux pump. This Paraburkholderia phytofirmans (strain DSM 17436 / LMG 22146 / PsJN) (Burkholderia phytofirmans) protein is Putative manganese efflux pump MntP.